Reading from the N-terminus, the 507-residue chain is Chromosomal replication initiator protein DnaA (507 aa).

Residues 1–112 form a domain I, interacts with DnaA modulators region; that stretch reads MTDDPGSGFT…PATDEADDTT (112 aa). Residues 99 to 162 are disordered; it reads RIAPPATDEA…ERPRNTDSAT (64 aa). Over residues 113–127 the composition is skewed to polar residues; that stretch reads VPPSENPATTSPDTT. The segment at 113–166 is domain II; that stretch reads VPPSENPATTSPDTTTDNDEIDDSAAARGDNQHSWPSYFTERPRNTDSATAGVT. Residues 167-383 are domain III, AAA+ region; that stretch reads SLNRRYTFDT…GALIRVTAFA (217 aa). Residues G211, G213, K214, and T215 each contribute to the ATP site. A domain IV, binds dsDNA region spans residues 384–507; that stretch reads SLNKTPIDKA…TTRIRQRSKR (124 aa).

Belongs to the DnaA family. Oligomerizes as a right-handed, spiral filament on DNA at oriC.

It localises to the cytoplasm. Its function is as follows. Plays an essential role in the initiation and regulation of chromosomal replication. ATP-DnaA binds to the origin of replication (oriC) to initiate formation of the DNA replication initiation complex once per cell cycle. Binds the DnaA box (a 9 base pair repeat at the origin) and separates the double-stranded (ds)DNA. Forms a right-handed helical filament on oriC DNA; dsDNA binds to the exterior of the filament while single-stranded (ss)DNA is stabiized in the filament's interior. The ATP-DnaA-oriC complex binds and stabilizes one strand of the AT-rich DNA unwinding element (DUE), permitting loading of DNA polymerase. After initiation quickly degrades to an ADP-DnaA complex that is not apt for DNA replication. Binds acidic phospholipids. This is Chromosomal replication initiator protein DnaA from Mycobacterium bovis (strain ATCC BAA-935 / AF2122/97).